The following is a 190-amino-acid chain: Xanthine phosphoribosyltransferase 1 (190 aa).

Residues leucine 20 and asparagine 27 each coordinate xanthine. Residue 129–133 (AQGCA) participates in 5-phospho-alpha-D-ribose 1-diphosphate binding. Lysine 157 contributes to the xanthine binding site.

Belongs to the purine/pyrimidine phosphoribosyltransferase family. Xpt subfamily. As to quaternary structure, homodimer.

The protein localises to the cytoplasm. The enzyme catalyses XMP + diphosphate = xanthine + 5-phospho-alpha-D-ribose 1-diphosphate. It participates in purine metabolism; XMP biosynthesis via salvage pathway; XMP from xanthine: step 1/1. In terms of biological role, converts the preformed base xanthine, a product of nucleic acid breakdown, to xanthosine 5'-monophosphate (XMP), so it can be reused for RNA or DNA synthesis. The sequence is that of Xanthine phosphoribosyltransferase 1 from Clostridium perfringens (strain ATCC 13124 / DSM 756 / JCM 1290 / NCIMB 6125 / NCTC 8237 / Type A).